The chain runs to 325 residues: RNA ligase 1 (325 aa).

It depends on Mg(2+) as a cofactor. Requires Mn(2+) as cofactor. AMPylates itself (auto-AMPylation).

The enzyme catalyses ATP + (ribonucleotide)n-3'-hydroxyl + 5'-phospho-(ribonucleotide)m = (ribonucleotide)n+m + AMP + diphosphate.. In terms of biological role, functions as an RNA ligase, in vitro. The ligation reaction entails three nucleotidyl transfer steps. In the first step, the RNA ligase reacts with ATP in the absence of nucleic acid to form a covalent ligase-AMP intermediate and release pyrophosphate. In step 2, the ligase-AMP binds to the nucleic acid and transfers the adenylate to the 5'-PO4 terminus to form an adenylylated intermediate. In step 3, the RNA ligase directs the attack of the 3'-OH on the 5'-phosphoanhydride linkage, resulting in a repaired 3'-5' phosphodiester and release of AMP. Exhibits selectivity for single-stranded RNA substrates and may not have nick-sealing activity on double-stranded DNA-RNA hybrids. May play a role in maintaining RNA integrity under stress conditions, for example in response to reactive oxygen species (ROS). The sequence is that of RNA ligase 1 from Pongo abelii (Sumatran orangutan).